The sequence spans 199 residues: Chaperone protein TorD (199 aa).

The protein belongs to the TorD/DmsD family. TorD subfamily.

Its subcellular location is the cytoplasm. Involved in the biogenesis of TorA. Acts on TorA before the insertion of the molybdenum cofactor and, as a result, probably favors a conformation of the apoenzyme that is competent for acquiring the cofactor. The protein is Chaperone protein TorD of Escherichia coli O127:H6 (strain E2348/69 / EPEC).